Reading from the N-terminus, the 456-residue chain is Bifunctional protein GlmU (456 aa).

The tract at residues 1 to 229 (MSNSAMSVVI…LSEVEGVNNR (229 aa)) is pyrophosphorylase. UDP-N-acetyl-alpha-D-glucosamine is bound by residues 11 to 14 (LAAG), lysine 25, glutamine 76, 81 to 82 (GT), 103 to 105 (YGD), glycine 140, glutamate 154, asparagine 169, and asparagine 227. Residue aspartate 105 participates in Mg(2+) binding. Residue asparagine 227 participates in Mg(2+) binding. The segment at 230–250 (LQLSALERVYQREQADRLLLA) is linker. Residues 251-456 (GVMLLDPARF…SGWQRPVKKK (206 aa)) form an N-acetyltransferase region. 2 residues coordinate UDP-N-acetyl-alpha-D-glucosamine: arginine 333 and lysine 351. Catalysis depends on histidine 363, which acts as the Proton acceptor. UDP-N-acetyl-alpha-D-glucosamine is bound by residues tyrosine 366 and asparagine 377. Acetyl-CoA is bound by residues alanine 380, 386–387 (NY), serine 405, alanine 423, and arginine 440.

In the N-terminal section; belongs to the N-acetylglucosamine-1-phosphate uridyltransferase family. This sequence in the C-terminal section; belongs to the transferase hexapeptide repeat family. In terms of assembly, homotrimer. The cofactor is Mg(2+).

The protein resides in the cytoplasm. It catalyses the reaction alpha-D-glucosamine 1-phosphate + acetyl-CoA = N-acetyl-alpha-D-glucosamine 1-phosphate + CoA + H(+). It carries out the reaction N-acetyl-alpha-D-glucosamine 1-phosphate + UTP + H(+) = UDP-N-acetyl-alpha-D-glucosamine + diphosphate. Its pathway is nucleotide-sugar biosynthesis; UDP-N-acetyl-alpha-D-glucosamine biosynthesis; N-acetyl-alpha-D-glucosamine 1-phosphate from alpha-D-glucosamine 6-phosphate (route II): step 2/2. The protein operates within nucleotide-sugar biosynthesis; UDP-N-acetyl-alpha-D-glucosamine biosynthesis; UDP-N-acetyl-alpha-D-glucosamine from N-acetyl-alpha-D-glucosamine 1-phosphate: step 1/1. It participates in bacterial outer membrane biogenesis; LPS lipid A biosynthesis. Functionally, catalyzes the last two sequential reactions in the de novo biosynthetic pathway for UDP-N-acetylglucosamine (UDP-GlcNAc). The C-terminal domain catalyzes the transfer of acetyl group from acetyl coenzyme A to glucosamine-1-phosphate (GlcN-1-P) to produce N-acetylglucosamine-1-phosphate (GlcNAc-1-P), which is converted into UDP-GlcNAc by the transfer of uridine 5-monophosphate (from uridine 5-triphosphate), a reaction catalyzed by the N-terminal domain. The sequence is that of Bifunctional protein GlmU from Pectobacterium carotovorum subsp. carotovorum (strain PC1).